The chain runs to 98 residues: uncharacterized protein (98 aa).

It belongs to the IS150/IS1296 orfA family.

This is an uncharacterized protein from Haemophilus influenzae (strain ATCC 51907 / DSM 11121 / KW20 / Rd).